We begin with the raw amino-acid sequence, 200 residues long: Small ribosomal subunit protein uS4 (200 aa).

The disordered stretch occupies residues 22-41 (TGKEIEKRPYAPGQHGPNQR). One can recognise an S4 RNA-binding domain in the interval 92–152 (TRLDNLVYRL…EKSQNLAVVG (61 aa)).

It belongs to the universal ribosomal protein uS4 family. As to quaternary structure, part of the 30S ribosomal subunit. Contacts protein S5. The interaction surface between S4 and S5 is involved in control of translational fidelity.

Its function is as follows. One of the primary rRNA binding proteins, it binds directly to 16S rRNA where it nucleates assembly of the body of the 30S subunit. With S5 and S12 plays an important role in translational accuracy. This chain is Small ribosomal subunit protein uS4, found in Lysinibacillus sphaericus (strain C3-41).